The chain runs to 577 residues: Myb-like protein N (577 aa).

Disordered stretches follow at residues 1–23, 206–225, and 240–264; these read MMTINNNNLNNSNNINNNNNIYT, TPFSLQCPNSPNSTSSSPLN, and SSSSSASSSSTSSQPPSPQTLLSSS. Low complexity predominate over residues 213–225; that stretch reads PNSPNSTSSSPLN. 2 HTH myb-type domains span residues 403-465 and 466-517; these read KKST…CPAI and RKGS…SREV. 2 DNA-binding regions (H-T-H motif) span residues 437–461 and 489–513; these read WKKIALQIGGGKTGAQCAQHWKRVL and WKNVASEIRTRTDIQCRYQYFKSCM. Residues 518–570 enclose the Myb-like domain; that stretch reads PWTPKEDEILQKKVIENKQDSTKEIGWMDLSKAMARARQTKIPRTALECKIRF.

Its subcellular location is the nucleus. The polypeptide is Myb-like protein N (mybN) (Dictyostelium discoideum (Social amoeba)).